The primary structure comprises 847 residues: Leucine--tRNA ligase (847 aa).

A 'HIGH' region motif is present at residues 39 to 49; it reads PYPSGALHMGH. The 'KMSKS' region signature appears at 613–617; the sequence is KMSKS. ATP is bound at residue Lys-616.

The protein belongs to the class-I aminoacyl-tRNA synthetase family.

The protein resides in the cytoplasm. The catalysed reaction is tRNA(Leu) + L-leucine + ATP = L-leucyl-tRNA(Leu) + AMP + diphosphate. In Gloeobacter violaceus (strain ATCC 29082 / PCC 7421), this protein is Leucine--tRNA ligase.